Consider the following 240-residue polypeptide: E3 ubiquitin-protein ligase LubX (240 aa).

U-box domains are found at residues 30–103 (TTPT…QTNY) and 125–198 (EIPD…RKRE).

Ubiquitinated in the presence of host E1 ubiquitin-activating enzyme, E2 ubiquitin-conjugating enzyme and ubiquitin.

It is found in the secreted. The protein resides in the host cell. It carries out the reaction S-ubiquitinyl-[E2 ubiquitin-conjugating enzyme]-L-cysteine + [acceptor protein]-L-lysine = [E2 ubiquitin-conjugating enzyme]-L-cysteine + N(6)-ubiquitinyl-[acceptor protein]-L-lysine.. In terms of biological role, effector proteins function to alter host cell physiology and promote bacterial survival in host tissues. This protein is an E3 ubiquitin ligase that interferes with host's ubiquitination pathway. The sequence is that of E3 ubiquitin-protein ligase LubX (lubX) from Legionella pneumophila (strain Paris).